A 362-amino-acid chain; its full sequence is Cobalt-precorrin-5B C(1)-methyltransferase (362 aa).

This sequence belongs to the CbiD family.

It carries out the reaction Co-precorrin-5B + S-adenosyl-L-methionine = Co-precorrin-6A + S-adenosyl-L-homocysteine. Its pathway is cofactor biosynthesis; adenosylcobalamin biosynthesis; cob(II)yrinate a,c-diamide from sirohydrochlorin (anaerobic route): step 6/10. Functionally, catalyzes the methylation of C-1 in cobalt-precorrin-5B to form cobalt-precorrin-6A. In Burkholderia ambifaria (strain MC40-6), this protein is Cobalt-precorrin-5B C(1)-methyltransferase.